The primary structure comprises 427 residues: Serine--tRNA ligase (427 aa).

231–233 (TAE) is an L-serine binding site. 262 to 264 (RSE) is an ATP binding site. Glu285 provides a ligand contact to L-serine. 349-352 (EISS) is a binding site for ATP. Residue Ser385 coordinates L-serine.

The protein belongs to the class-II aminoacyl-tRNA synthetase family. Type-1 seryl-tRNA synthetase subfamily. Homodimer. The tRNA molecule binds across the dimer.

The protein resides in the cytoplasm. The enzyme catalyses tRNA(Ser) + L-serine + ATP = L-seryl-tRNA(Ser) + AMP + diphosphate + H(+). It carries out the reaction tRNA(Sec) + L-serine + ATP = L-seryl-tRNA(Sec) + AMP + diphosphate + H(+). It participates in aminoacyl-tRNA biosynthesis; selenocysteinyl-tRNA(Sec) biosynthesis; L-seryl-tRNA(Sec) from L-serine and tRNA(Sec): step 1/1. In terms of biological role, catalyzes the attachment of serine to tRNA(Ser). Is also able to aminoacylate tRNA(Sec) with serine, to form the misacylated tRNA L-seryl-tRNA(Sec), which will be further converted into selenocysteinyl-tRNA(Sec). In Hahella chejuensis (strain KCTC 2396), this protein is Serine--tRNA ligase.